Here is a 458-residue protein sequence, read N- to C-terminus: ATP synthase subunit beta (458 aa).

Position 148 to 155 (148 to 155 (GGAGVGKT)) interacts with ATP.

Belongs to the ATPase alpha/beta chains family. As to quaternary structure, F-type ATPases have 2 components, CF(1) - the catalytic core - and CF(0) - the membrane proton channel. CF(1) has five subunits: alpha(3), beta(3), gamma(1), delta(1), epsilon(1). CF(0) has three main subunits: a(1), b(2) and c(9-12). The alpha and beta chains form an alternating ring which encloses part of the gamma chain. CF(1) is attached to CF(0) by a central stalk formed by the gamma and epsilon chains, while a peripheral stalk is formed by the delta and b chains.

The protein localises to the cell inner membrane. It carries out the reaction ATP + H2O + 4 H(+)(in) = ADP + phosphate + 5 H(+)(out). Functionally, produces ATP from ADP in the presence of a proton gradient across the membrane. The catalytic sites are hosted primarily by the beta subunits. This is ATP synthase subunit beta from Laribacter hongkongensis (strain HLHK9).